A 131-amino-acid chain; its full sequence is Holo-[acyl-carrier-protein] synthase (131 aa).

Mg(2+) is bound by residues aspartate 8 and glutamate 59.

Belongs to the P-Pant transferase superfamily. AcpS family. Mg(2+) is required as a cofactor.

The protein resides in the cytoplasm. The catalysed reaction is apo-[ACP] + CoA = holo-[ACP] + adenosine 3',5'-bisphosphate + H(+). In terms of biological role, transfers the 4'-phosphopantetheine moiety from coenzyme A to a Ser of acyl-carrier-protein. This chain is Holo-[acyl-carrier-protein] synthase, found in Rickettsia felis (strain ATCC VR-1525 / URRWXCal2) (Rickettsia azadi).